A 134-amino-acid chain; its full sequence is Small ribosomal subunit protein bS6 (134 aa).

The segment at 97-134 is disordered; it reads TDVSPIKASEGREDRRSAPQREERNHDNSDEVSEESED. Positions 105 to 125 are enriched in basic and acidic residues; sequence SEGREDRRSAPQREERNHDNS.

Belongs to the bacterial ribosomal protein bS6 family.

Functionally, binds together with bS18 to 16S ribosomal RNA. The chain is Small ribosomal subunit protein bS6 from Marinomonas sp. (strain MWYL1).